The following is a 122-amino-acid chain: Large ribosomal subunit protein eL18 (122 aa).

It belongs to the eukaryotic ribosomal protein eL18 family.

This is Large ribosomal subunit protein eL18 from Thermoplasma volcanium (strain ATCC 51530 / DSM 4299 / JCM 9571 / NBRC 15438 / GSS1).